A 103-amino-acid polypeptide reads, in one-letter code: Pyrimidine/purine nucleoside phosphorylase (103 aa).

Belongs to the nucleoside phosphorylase PpnP family.

It catalyses the reaction a purine D-ribonucleoside + phosphate = a purine nucleobase + alpha-D-ribose 1-phosphate. It carries out the reaction adenosine + phosphate = alpha-D-ribose 1-phosphate + adenine. The enzyme catalyses cytidine + phosphate = cytosine + alpha-D-ribose 1-phosphate. The catalysed reaction is guanosine + phosphate = alpha-D-ribose 1-phosphate + guanine. It catalyses the reaction inosine + phosphate = alpha-D-ribose 1-phosphate + hypoxanthine. It carries out the reaction thymidine + phosphate = 2-deoxy-alpha-D-ribose 1-phosphate + thymine. The enzyme catalyses uridine + phosphate = alpha-D-ribose 1-phosphate + uracil. The catalysed reaction is xanthosine + phosphate = alpha-D-ribose 1-phosphate + xanthine. In terms of biological role, catalyzes the phosphorolysis of diverse nucleosides, yielding D-ribose 1-phosphate and the respective free bases. Can use uridine, adenosine, guanosine, cytidine, thymidine, inosine and xanthosine as substrates. Also catalyzes the reverse reactions. The chain is Pyrimidine/purine nucleoside phosphorylase from Sulfurovum sp. (strain NBC37-1).